Consider the following 135-residue polypeptide: Galectin-1 (135 aa).

The residue at position 2 (Ala2) is an N-acetylalanine. The Galectin domain maps to 4–135; sequence GLVASNLNLK…DFKIKCVAFD (132 aa). Residues Lys13 and Lys29 each carry the N6-acetyllysine modification. Ser30 is modified (phosphoserine). Residues 45–49, His53, Asn62, and 69–72 each bind a beta-D-galactoside; these read HFNPR and WGAE. The residue at position 108 (Lys108) is an N6-acetyllysine; alternate. The residue at position 108 (Lys108) is an N6-succinyllysine; alternate. Lys128 carries the N6-acetyllysine modification.

In terms of assembly, homodimer. Binds LGALS3BP. Interacts with CD2, CD3, CD4, CD6, CD7, CD43, ALCAM and CD45. Interacts with laminin (via poly-N-acetyllactosamine). Interacts with SUSD2. Interacts with cargo receptor TMED10; the interaction mediates the translocation from the cytoplasm into the ERGIC (endoplasmic reticulum-Golgi intermediate compartment) and thereby secretion. In terms of processing, the N-terminus is blocked.

It is found in the secreted. Its subcellular location is the extracellular space. The protein localises to the extracellular matrix. It localises to the cytoplasm. Its function is as follows. Lectin that binds beta-galactoside and a wide array of complex carbohydrates. Plays a role in regulating apoptosis, cell proliferation and cell differentiation. Inhibits CD45 protein phosphatase activity and therefore the dephosphorylation of Lyn kinase. Strong inducer of T-cell apoptosis. The protein is Galectin-1 of Bubalus bubalis (Domestic water buffalo).